The chain runs to 124 residues: MINKISGTEIRALAKHICMSPHKARRVIDQIRGCSYEQTLMILELMPYRVCYPVFKLVYSAAANASHNMGLNEADSFISKAEVHGGAMMKKFKPKARGRSYPIKRPTCHITIVLKERKKSPLVV.

This sequence belongs to the universal ribosomal protein uL22 family. As to quaternary structure, part of the 50S ribosomal subunit.

The protein localises to the plastid. Its subcellular location is the chloroplast. Functionally, this protein binds specifically to 23S rRNA. Its function is as follows. The globular domain of the protein is located near the polypeptide exit tunnel on the outside of the subunit, while an extended beta-hairpin is found that lines the wall of the exit tunnel in the center of the 70S ribosome. This is Large ribosomal subunit protein uL22c (rpl22) from Amborella trichopoda.